The chain runs to 162 residues: MAQDAITSVINSADVQGKYLDSAALDKLKGYFGTGELRVRAASTISANAAAIVKEAVAKSLLYSDVTRPGGNMYTTRRYAACIRDLDYYLRYATYAMLAGDPSILDERVLNGLKETYNSLGVPVSSTVQAIQAIKEVTASLVGSDAGKEMGVYLDYISSGLS.

Position 72 is an N4-methylasparagine (Asn72). Cys82 is a (2R,3E)-phycocyanobilin binding site.

The protein belongs to the phycobiliprotein family. As to quaternary structure, heterodimer of an alpha and a beta chain. Post-translationally, contains one covalently linked phycocyanobilin chromophore.

It is found in the cellular thylakoid membrane. In terms of biological role, light-harvesting photosynthetic bile pigment-protein from the phycobiliprotein complex. Allophycocyanin has a maximum absorption at approximately 650 nanometers. In Microchaete diplosiphon (Fremyella diplosiphon), this protein is Allophycocyanin beta chain.